The chain runs to 146 residues: Cytochrome c-556 (146 aa).

The first 24 residues, 1-24 (MCMKLKTITAAMLFGCLCAGAVYA), serve as a signal peptide directing secretion. Residues Met35, Cys135, Cys138, and His139 each coordinate heme c.

As to quaternary structure, monomer. Post-translationally, binds 1 heme c group covalently per subunit.

Functionally, low-spin monoheme cytochrome c. The polypeptide is Cytochrome c-556 (Agrobacterium fabrum (strain C58 / ATCC 33970) (Agrobacterium tumefaciens (strain C58))).